Reading from the N-terminus, the 319-residue chain is GTPase Era (319 aa).

In terms of domain architecture, Era-type G spans 9–196; it reads RSGVSLIIGR…MRTLRDLLPE (188 aa). The interval 17–24 is G1; sequence GRPSSGKS. 17–24 is a GTP binding site; the sequence is GRPSSGKS. Residues 43 to 47 are G2; the sequence is QTTRN. The interval 64 to 67 is G3; that stretch reads DTPG. GTP-binding positions include 64–68 and 127–130; these read DTPGY and NKVD. The interval 127 to 130 is G4; sequence NKVD. A G5 region spans residues 175–177; that stretch reads ISA. The KH type-2 domain occupies 227–303; sequence CRDELPHALY…HISLDIRVKV (77 aa).

It belongs to the TRAFAC class TrmE-Era-EngA-EngB-Septin-like GTPase superfamily. Era GTPase family. Monomer.

Its subcellular location is the cytoplasm. The protein resides in the cell inner membrane. Its function is as follows. An essential GTPase that binds both GDP and GTP, with rapid nucleotide exchange. Plays a role in 16S rRNA processing and 30S ribosomal subunit biogenesis and possibly also in cell cycle regulation and energy metabolism. In Treponema pallidum (strain Nichols), this protein is GTPase Era.